A 365-amino-acid chain; its full sequence is UDP-N-acetylglucosamine--N-acetylmuramyl-(pentapeptide) pyrophosphoryl-undecaprenol N-acetylglucosamine transferase (365 aa).

Residues 12–14, Asn-123, Arg-166, Ser-194, and Gln-295 contribute to the UDP-N-acetyl-alpha-D-glucosamine site; that span reads TGG.

It belongs to the glycosyltransferase 28 family. MurG subfamily.

It localises to the cell inner membrane. It carries out the reaction di-trans,octa-cis-undecaprenyl diphospho-N-acetyl-alpha-D-muramoyl-L-alanyl-D-glutamyl-meso-2,6-diaminopimeloyl-D-alanyl-D-alanine + UDP-N-acetyl-alpha-D-glucosamine = di-trans,octa-cis-undecaprenyl diphospho-[N-acetyl-alpha-D-glucosaminyl-(1-&gt;4)]-N-acetyl-alpha-D-muramoyl-L-alanyl-D-glutamyl-meso-2,6-diaminopimeloyl-D-alanyl-D-alanine + UDP + H(+). It functions in the pathway cell wall biogenesis; peptidoglycan biosynthesis. In terms of biological role, cell wall formation. Catalyzes the transfer of a GlcNAc subunit on undecaprenyl-pyrophosphoryl-MurNAc-pentapeptide (lipid intermediate I) to form undecaprenyl-pyrophosphoryl-MurNAc-(pentapeptide)GlcNAc (lipid intermediate II). The protein is UDP-N-acetylglucosamine--N-acetylmuramyl-(pentapeptide) pyrophosphoryl-undecaprenol N-acetylglucosamine transferase of Phenylobacterium zucineum (strain HLK1).